The following is a 692-amino-acid chain: Glycine--tRNA ligase beta subunit (692 aa).

The protein belongs to the class-II aminoacyl-tRNA synthetase family. In terms of assembly, tetramer of two alpha and two beta subunits.

The protein localises to the cytoplasm. It catalyses the reaction tRNA(Gly) + glycine + ATP = glycyl-tRNA(Gly) + AMP + diphosphate. The protein is Glycine--tRNA ligase beta subunit of Pseudoalteromonas atlantica (strain T6c / ATCC BAA-1087).